The following is a 626-amino-acid chain: Colicin-Ia (626 aa).

A translocation (T) region spans residues 23–225; that stretch reads EIMAVDIYVN…TRLSELEKNG (203 aa). A compositionally biased stretch (polar residues) spans 276–286; the sequence is QQLTQQKNTPD. A disordered region spans residues 276–308; sequence QQLTQQKNTPDGKTIVSPEKFPGRSSTNHSIVV. Residues 282–385 are receptor-binding (R); the sequence is KNTPDGKTIV…LRQRLLDARN (104 aa). The channel (C) stretch occupies residues 450 to 626; it reads KDAINFTTEF…VEKANKFWGI (177 aa). 2 helical membrane-spanning segments follow: residues 580–594 and 597–612; these read ATAL…LTGS and GIIG…GALI.

The protein belongs to the channel forming colicin family.

Its subcellular location is the cell membrane. Its function is as follows. This colicin is a channel-forming colicin. This class of transmembrane toxins depolarize the cytoplasmic membrane, leading to dissipation of cellular energy. In terms of biological role, colicins are polypeptide toxins produced by and active against E.coli and closely related bacteria. The sequence is that of Colicin-Ia (cia) from Escherichia coli.